The sequence spans 356 residues: NADH-quinone oxidoreductase subunit H (356 aa).

8 consecutive transmembrane segments (helical) span residues Ile-18 to Ile-38, Gly-87 to Ile-107, Val-120 to Gly-140, Ile-166 to Val-186, Ile-205 to Leu-225, Ala-265 to Ile-285, Trp-292 to Met-312, and Phe-333 to Ile-353.

This sequence belongs to the complex I subunit 1 family. As to quaternary structure, NDH-1 is composed of 14 different subunits. Subunits NuoA, H, J, K, L, M, N constitute the membrane sector of the complex.

It localises to the cell inner membrane. It carries out the reaction a quinone + NADH + 5 H(+)(in) = a quinol + NAD(+) + 4 H(+)(out). Functionally, NDH-1 shuttles electrons from NADH, via FMN and iron-sulfur (Fe-S) centers, to quinones in the respiratory chain. The immediate electron acceptor for the enzyme in this species is believed to be ubiquinone. Couples the redox reaction to proton translocation (for every two electrons transferred, four hydrogen ions are translocated across the cytoplasmic membrane), and thus conserves the redox energy in a proton gradient. This subunit may bind ubiquinone. This chain is NADH-quinone oxidoreductase subunit H, found in Bradyrhizobium sp. (strain BTAi1 / ATCC BAA-1182).